The chain runs to 5098 residues: Auxin transport protein BIG (5098 aa).

Alanine 2 carries the post-translational modification N-acetylalanine. 2 helical membrane-spanning segments follow: residues 1150 to 1170 and 1458 to 1478; these read AILL…NGLL and LAAE…IGTL. A compositionally biased stretch (acidic residues) spans 1539–1549; it reads SVDEDEDDGTS. The tract at residues 1539–1562 is disordered; that stretch reads SVDEDEDDGTSDGEVASLDKEDEE. Residues 1573–1644 form a UBR-type zinc finger; the sequence is KVCTFTSSGS…RGSSCQCLKP (72 aa). The ZZ-type zinc finger occupies 2613-2672; it reads SVQYCCDGCSTVPILRRRWHCTVCPDFDLCEACYEVLDADRLPPPHTRDHPMTAIPIEVE. Zn(2+) contacts are provided by cysteine 2618, cysteine 2621, cysteine 2633, cysteine 2636, cysteine 2642, cysteine 2645, histidine 2658, and histidine 2662. The helical transmembrane segment at 2813 to 2833 threads the bilayer; the sequence is SSLGEIVILVFMFFTLMLRSW. The interval 3149–3174 is disordered; sequence EVVTGSNRSGSQSVDSKKKKKGEDGH. Residues 3151-3162 show a composition bias toward polar residues; sequence VTGSNRSGSQSV. An MYND-type; degenerate zinc finger spans residues 3464–3504; sequence CPRCSRPVTDKHGICSNCHENAYQCRQCRNINYENLDSFLC. 2 coiled-coil regions span residues 3537–3557 and 4313–4333; these read KKGL…YQQL and LEIL…NQEE. Positions 4569 to 5098 are UBR4 E3 catalytic module; the sequence is PSVPLILSML…QFVRSAIDKD (530 aa). The HemiRING-type zinc finger occupies 4698–4817; the sequence is GLACMVCREG…WDNLNALGRA (120 aa). The Zn(2+) site is built by cysteine 4701, cysteine 4704, histidine 4751, and cysteine 4754. The UZI domain occupies 4820–5098; that stretch reads SRLRLLTYDI…QFVRSAIDKD (279 aa). Residues 4891 to 4903 are compositionally biased toward low complexity; that stretch reads SSTSTATAPSSDS. The interval 4891 to 4915 is disordered; the sequence is SSTSTATAPSSDSRPLTPGSQLSST.

This sequence belongs to the UBR4 family. Constitutively expressed in roots, rosette leaves, inflorescence stems, and flowers. Present in inflorescence meristems, floral meristems and vascular tissues.

Its subcellular location is the membrane. In terms of biological role, required for auxin efflux and polar auxin transport (PAT) influencing auxin-mediated developmental responses (e.g. cell elongation, apical dominance, lateral root production, inflorescence architecture, general growth and development). Controls the elongation of the pedicels and stem internodes through auxin action. Involved in the expression modulation of light-regulated genes. Represses CAB1 and CAB3 genes expression in etiolated seedlings. Confers sensitivity to the auxin transport inhibitors N-1-naphthylphthalamic acid (NPA), 2-carboxyphenyl-3-phenylpropane-l,2-dione (CPD), and methyl-2-chloro-9-hydroxyfluorene-9-carboxylate (CFM). Influences the polarized subcellular distribution of the auxin transporter PIN1 in response to auxin transport inhibitors. Plays a role in the regulation of responses to phytohormones such as auxin, cytokinins, ethylene and gibberellic acid (GA), particularly during light-mediated stimuli (e.g. shade ovoidance, etiolation). Required for pericycle cell activation to form lateral root primordia (LRP) in both high and low phosphate P conditions. Necessary for the plant-growth promotion and lateral root development mediated by the fungus Trichoderma virens. The chain is Auxin transport protein BIG (BIG) from Arabidopsis thaliana (Mouse-ear cress).